We begin with the raw amino-acid sequence, 1337 residues long: Aldehyde oxidase 4 (1337 aa).

The 88-residue stretch at 4–91 (DDLVFAVNGE…GCSITTSDGL (88 aa)) folds into the 2Fe-2S ferredoxin-type domain. [2Fe-2S] cluster is bound by residues cysteine 43, cysteine 48, cysteine 51, cysteine 73, cysteine 113, cysteine 116, cysteine 155, and cysteine 157. Residues 225-409 (LDQTRYHWST…LKVHIPRWIA (185 aa)) form the FAD-binding PCMH-type domain. FAD-binding positions include 259–266 (LVVGNTGT), 342–346 (SIGGN), aspartate 358, and leucine 399. Residues glutamine 771, phenylalanine 802, and arginine 915 each contribute to the Mo-molybdopterin site. The active-site Proton acceptor is the glutamate 1265.

Belongs to the xanthine dehydrogenase family. In terms of assembly, aldehyde oxidases (AO) are homodimers and heterodimers of AO subunits. It depends on [2Fe-2S] cluster as a cofactor. Requires FAD as cofactor. Mo-molybdopterin is required as a cofactor. In terms of tissue distribution, transcripts expressed at high levels in developing siliques and at low levels in dry seeds.

The protein localises to the cytoplasm. The catalysed reaction is indole-3-acetaldehyde + O2 + H2O = (indol-3-yl)acetate + H2O2 + H(+). It catalyses the reaction an aldehyde + O2 + H2O = a carboxylate + H2O2 + H(+). The enzyme catalyses benzaldehyde + O2 + H2O = benzoate + H2O2 + H(+). It carries out the reaction hexanal + O2 + H2O = hexanoate + H2O2 + H(+). The catalysed reaction is 1-naphthaldehyde + O2 + H2O = 1-naphthoate + H2O2 + H(+). It catalyses the reaction vanillin + O2 + H2O = vanillate + H2O2 + H(+). The enzyme catalyses malonaldehyde + O2 + H2O = 3-oxopropanoate + H2O2 + H(+). It carries out the reaction citral + O2 + H2O = 3,7-dimethylocta-2,6-dienoate + H2O2 + H(+). The catalysed reaction is acrolein + O2 + H2O = acrylate + H2O2 + H(+). It catalyses the reaction (E)-4-hydroxynon-2-enal + O2 + H2O = (E)-4-hydroxynon-2-enoate + H2O2 + H(+). The enzyme catalyses (E)-cinnamaldehyde + O2 + H2O = (E)-cinnamate + H2O2 + H(+). It carries out the reaction indole-3-carbaldehyde + O2 + H2O = indole-3-carboxylate + H2O2 + H(+). The catalysed reaction is propanal + O2 + H2O = propanoate + H2O2 + H(+). It catalyses the reaction dodecanal + O2 + H2O = dodecanoate + H2O2 + H(+). The enzyme catalyses salicylaldehyde + O2 + H2O = salicylate + H2O2 + H(+). With respect to regulation, inhibited by Cu(2+). Its function is as follows. Aldehyde oxidase with a broad substrate specificity. Involved in the accumulation of benzoic acid (BA) in siliques. Delays and protects siliques from senescence by catalyzing aldehyde detoxification in siliques. Catalyzes the oxidation of an array of aromatic and aliphatic aldehydes, including vanillin and the reactive carbonyl species (RCS) acrolein, 4-hydroxyl-2-nonenal (HNE), and malondialdehyde (MDA). This Arabidopsis thaliana (Mouse-ear cress) protein is Aldehyde oxidase 4.